We begin with the raw amino-acid sequence, 191 residues long: Glycerol-3-phosphate acyltransferase (191 aa).

A run of 5 helical transmembrane segments spans residues 3–23 (YLIV…FILT), 51–71 (TLGY…VLYV), 78–98 (YIFI…WLKF), 108–128 (VGIL…SWAV), and 150–170 (YLIV…VLIF).

It belongs to the PlsY family. Probably interacts with PlsX.

It localises to the cell inner membrane. The catalysed reaction is an acyl phosphate + sn-glycerol 3-phosphate = a 1-acyl-sn-glycero-3-phosphate + phosphate. Its pathway is lipid metabolism; phospholipid metabolism. In terms of biological role, catalyzes the transfer of an acyl group from acyl-phosphate (acyl-PO(4)) to glycerol-3-phosphate (G3P) to form lysophosphatidic acid (LPA). This enzyme utilizes acyl-phosphate as fatty acyl donor, but not acyl-CoA or acyl-ACP. The chain is Glycerol-3-phosphate acyltransferase from Pelagibacter ubique (strain HTCC1062).